We begin with the raw amino-acid sequence, 191 residues long: Fe/S biogenesis protein NfuA (191 aa).

Cys-149 and Cys-152 together coordinate [4Fe-4S] cluster.

The protein belongs to the NfuA family. In terms of assembly, homodimer. [4Fe-4S] cluster is required as a cofactor.

Its function is as follows. Involved in iron-sulfur cluster biogenesis. Binds a 4Fe-4S cluster, can transfer this cluster to apoproteins, and thereby intervenes in the maturation of Fe/S proteins. Could also act as a scaffold/chaperone for damaged Fe/S proteins. In Salmonella arizonae (strain ATCC BAA-731 / CDC346-86 / RSK2980), this protein is Fe/S biogenesis protein NfuA.